Consider the following 657-residue polypeptide: 1-deoxy-D-xylulose-5-phosphate synthase (657 aa).

Residues H73 and 113–115 (SHA) each bind thiamine diphosphate. A Mg(2+)-binding site is contributed by D145. Thiamine diphosphate contacts are provided by residues 146–147 (GA), N175, Y293, and E375. N175 is a binding site for Mg(2+).

The protein belongs to the transketolase family. DXPS subfamily. Homodimer. Requires Mg(2+) as cofactor. Thiamine diphosphate serves as cofactor.

The catalysed reaction is D-glyceraldehyde 3-phosphate + pyruvate + H(+) = 1-deoxy-D-xylulose 5-phosphate + CO2. It participates in metabolic intermediate biosynthesis; 1-deoxy-D-xylulose 5-phosphate biosynthesis; 1-deoxy-D-xylulose 5-phosphate from D-glyceraldehyde 3-phosphate and pyruvate: step 1/1. Its function is as follows. Catalyzes the acyloin condensation reaction between C atoms 2 and 3 of pyruvate and glyceraldehyde 3-phosphate to yield 1-deoxy-D-xylulose-5-phosphate (DXP). This chain is 1-deoxy-D-xylulose-5-phosphate synthase, found in Paenarthrobacter aurescens (strain TC1).